We begin with the raw amino-acid sequence, 116 residues long: Ly-6/neurotoxin-like protein 1 (116 aa).

Positions 1-20 (MTHLLTVFLVALMGLPVAQA) are cleaved as a signal peptide. A UPAR/Ly6 domain is found at 21–104 (LECHVCAYNG…GFATPVTLAL (84 aa)). 5 cysteine pairs are disulfide-bonded: Cys-23–Cys-46, Cys-26–Cys-33, Cys-39–Cys-64, Cys-68–Cys-85, and Cys-86–Cys-91. Residue Asn-92 is the site of GPI-anchor amidated asparagine attachment. Positions 93-116 (GAGFATPVTLALVPALLATFWSLL) are cleaved as a propeptide — removed in mature form.

In terms of assembly, interacts with nAChRs containing alpha-4:beta-2 (CHRNA4:CHRNB2) and alpha-7 (CHRNA7) subunits. Interacts with CHRNA4 probably in the endoplasmic reticulum prior to nAChR pentameric assembly. Interacts with KCNA2/Potassium voltage-gated channel subfamily A member 2. In terms of tissue distribution, expressed in neurons of multiple regions in the CNS, including the cerebral cortex, thalamus, substantia nigra, cerebellum, amygdala and hippocampus. Also expressed in kidney, heart and thymus, but at lower levels than in the brain. Expressed in the primary visual cortex (V1) and the lateral geniculate nucleus (at protein level).

It localises to the cell membrane. Its subcellular location is the cell projection. The protein resides in the dendrite. It is found in the endoplasmic reticulum. Functionally, acts in different tissues through interaction to nicotinic acetylcholine receptors (nAChRs). The proposed role as modulator of nAChR activity seems to be dependent on the nAChR subtype and stoichiometry, and to involve an effect on nAChR trafficking and its cell surface expression, and on single channel properties of the nAChR inserted in the plasma membrane. Modulates functional properties of nicotinic acetylcholine receptors (nAChRs) to prevent excessive excitation, and hence neurodegeneration. Enhances desensitization by increasing both the rate and extent of desensitization of alpha-4:beta-2-containing nAChRs and slowing recovery from desensitization. Promotes large amplitude ACh-evoked currents through alpha-4:beta-2 nAChRs. Is involved in regulation of the nAChR pentameric assembly in the endoplasmic reticulum. Shifts stoichiometry from high sensitivity alpha-4(2):beta-2(3) to low sensitivity alpha-4(3):beta-2(2) nAChR. In vitro modulates alpha-3:beta-4-containing nAChRs. Reduces cell surface expression of (alpha-3:beta-4)(2):beta-4 and (alpha-3:beta-4)(2):alpha-5 nAChRs suggesting an interaction with nAChR alpha-3(-):(+)beta-4 subunit interfaces and an allosteric mode. Corresponding single channel effects characterized by decreased unitary conductance, altered burst proportions and enhanced desensitization/inactivation seem to depend on nAChR alpha:alpha subunit interfaces and are greater in (alpha-3:beta-2)(2):alpha-3 when compared to (alpha-3:beta-2)(2):alpha-5 nAChRs. Prevents plasticity in the primary visual cortex late in life. This is Ly-6/neurotoxin-like protein 1 from Mus musculus (Mouse).